The primary structure comprises 77 residues: Bradykinin-potentiating peptide (77 aa).

Positions 1–22 are cleaved as a signal peptide; it reads MNKKTLLVIFIVTLLIADEVNS. Residues 74–77 constitute a propeptide that is removed on maturation; sequence RRRR.

Belongs to the non-disulfide-bridged peptide (NDBP) superfamily. Long chain multifunctional peptide (group 2) family. Expressed by the venom gland.

It is found in the secreted. Antimicrobial peptide. May also inhibit angiotensin-converting enzyme (ACE) and potentiate bradykinin (BK). The polypeptide is Bradykinin-potentiating peptide (Tityus discrepans (Venezuelan scorpion)).